We begin with the raw amino-acid sequence, 210 residues long: 3-hexulose-6-phosphate synthase 1 (210 aa).

Belongs to the HPS/KGPDC family. HPS subfamily.

It catalyses the reaction D-ribulose 5-phosphate + formaldehyde = D-arabino-hex-3-ulose 6-phosphate. It functions in the pathway one-carbon metabolism; formaldehyde assimilation via RuMP pathway; D-fructose 6-phosphate from D-ribulose 5-phosphate and formaldehyde: step 1/2. Catalyzes the condensation of ribulose 5-phosphate with formaldehyde to form 3-hexulose 6-phosphate. The sequence is that of 3-hexulose-6-phosphate synthase 1 from Staphylococcus saprophyticus subsp. saprophyticus (strain ATCC 15305 / DSM 20229 / NCIMB 8711 / NCTC 7292 / S-41).